The sequence spans 397 residues: Tryptophan synthase beta chain (397 aa).

Residue K88 is modified to N6-(pyridoxal phosphate)lysine.

It belongs to the TrpB family. Tetramer of two alpha and two beta chains. Pyridoxal 5'-phosphate serves as cofactor.

It carries out the reaction (1S,2R)-1-C-(indol-3-yl)glycerol 3-phosphate + L-serine = D-glyceraldehyde 3-phosphate + L-tryptophan + H2O. It functions in the pathway amino-acid biosynthesis; L-tryptophan biosynthesis; L-tryptophan from chorismate: step 5/5. The beta subunit is responsible for the synthesis of L-tryptophan from indole and L-serine. The sequence is that of Tryptophan synthase beta chain from Haemophilus influenzae (strain 86-028NP).